Consider the following 4652-residue polypeptide: Low-density lipoprotein receptor-related protein 2 (4652 aa).

An N-terminal signal peptide occupies residues 1 to 25 (MERWAAAAACTLLLAFAACLAPASG). Residues 26 to 4422 (RECLGNEFRC…SKGISPGTTV (4397 aa)) lie on the Extracellular side of the membrane. LDL-receptor class A domains are found at residues 27-63 (ECLGNEFRCSNGHCITESWRCDGTRDCLDGSDEIGCP), 66-104 (TCGSTQFHCENEDVCIPLYWVCDGEEDCSNGADEHQRCP), 108-144 (TCSSHHFTCTNGECIPVEYRCDHSTDCLDGTDEINCR), 142-181 (NCRYPVCQQQTCHNGACYNTSQRCDGEIDCRDASDELNCT), 183-219 (RCLRNEFQCGSGECIPRDYVCDHDPDCSDSSDEHSCS), 223-259 (PCKGNEFACSNGFCINQNWVCDGMADCLDNSDEDGCE), and 267-308 (ECYP…RVCD). 21 disulfide bridges follow: Cys-28–Cys-40, Cys-35–Cys-53, Cys-47–Cys-62, Cys-67–Cys-80, Cys-74–Cys-93, Cys-87–Cys-103, Cys-109–Cys-121, Cys-116–Cys-134, Cys-128–Cys-143, Cys-143–Cys-158, Cys-153–Cys-171, Cys-165–Cys-180, Cys-184–Cys-196, Cys-191–Cys-209, Cys-203–Cys-218, Cys-224–Cys-236, Cys-231–Cys-249, Cys-243–Cys-258, Cys-268–Cys-281, Cys-275–Cys-294, and Cys-288–Cys-307. Asn-160 and Asn-179 each carry an N-linked (GlcNAc...) asparagine glycan. Asn-341 carries an N-linked (GlcNAc...) asparagine glycan. Residues 348 to 386 (DFNDCQIWGICDHFCEDRIGHHQCFCAEGYVLEHEQHCR) enclose the EGF-like 1; calcium-binding domain. 3 cysteine pairs are disulfide-bonded: Cys-352/Cys-362, Cys-358/Cys-371, and Cys-373/Cys-385. A glycan (N-linked (GlcNAc...) asparagine) is linked at Asn-388. LDL-receptor class B repeat units follow at residues 436-478 (SKVF…DWIN), 479-521 (NKLY…DPTV), 522-568 (GYLF…DLVA), 569-613 (KRVY…FEDN), 753-795 (NAIF…DWIS), 796-837 (RNLY…HPIA), 838-881 (GYIF…DWGS), and 882-925 (SRLY…FGEY). N-linked (GlcNAc...) asparagine glycosylation is present at Asn-771. The N-linked (GlcNAc...) asparagine glycan is linked to Asn-866. Asn-1015 carries N-linked (GlcNAc...) asparagine glycosylation. An LDL-receptor class A 8 domain is found at 1025 to 1061 (QCGALSFPCNNGRCVPLHYRCDGVDDCHDNSDEVQCG). 3 disulfides stabilise this stretch: Cys-1026–Cys-1038, Cys-1033–Cys-1051, and Cys-1045–Cys-1060. N-linked (GlcNAc...) asparagine glycosylation is present at Asn-1064. 7 consecutive LDL-receptor class A domains span residues 1066 to 1104 (SCAPSAFACGHGGGECIPSYWRCDNHNDCVDGSDEQNCS), 1110 to 1146 (SCRADYFTCDNHMCIPKNWLCDTDNDCGDGSDEKRCD), 1150 to 1186 (TCSPTQFHCPNHRCIDLAFVCDGDKDCADGSDESACV), 1188 to 1225 (NCTDSQFKCVGSNKCISNTYRCDGVSDCSDHSDEIDCP), 1231 to 1269 (MCRQDEFQCREDGICIPDSWECDGHPDCLTGSDEHSGCP), 1272 to 1308 (TCPXSRFLCANGNCIFRDWLCDGDNDCRDMSDEKDCP), and 1313 to 1351 (LCPSWQWQCPGHSICVNLSSVCDGISDCPHGTDESPLCN). Intrachain disulfides connect Cys-1067-Cys-1081, Cys-1074-Cys-1094, Cys-1088-Cys-1103, Cys-1111-Cys-1123, Cys-1118-Cys-1136, Cys-1130-Cys-1145, Cys-1151-Cys-1163, Cys-1158-Cys-1176, and Cys-1170-Cys-1185. The N-linked (GlcNAc...) asparagine glycan is linked to Asn-1102. Residues Trp-1128, Asp-1131, Asp-1133, Asp-1135, Asp-1141, and Glu-1142 each contribute to the Ca(2+) site. An N-linked (GlcNAc...) asparagine glycan is attached at Asn-1188. Disulfide bonds link Cys-1189–Cys-1202, Cys-1196–Cys-1215, Cys-1209–Cys-1224, Cys-1232–Cys-1245, Cys-1239–Cys-1258, Cys-1252–Cys-1268, Cys-1273–Cys-1285, Cys-1280–Cys-1298, Cys-1292–Cys-1307, Cys-1314–Cys-1327, Cys-1321–Cys-1340, and Cys-1334–Cys-1350. Residues Tyr-1207, Asp-1210, Val-1212, Asp-1214, Asp-1220, and Glu-1221 each contribute to the Ca(2+) site. Residue Asn-1329 is glycosylated (N-linked (GlcNAc...) asparagine). N-linked (GlcNAc...) asparagine glycans are attached at residues Asn-1385, Asn-1452, Asn-1498, and Asn-1552. 10 LDL-receptor class B repeats span residues 1480–1522 (GRIF…DWVG), 1523–1565 (RNLY…DPRV), 1568–1611 (RVIF…DYPT), 1612–1654 (RLLY…TIFE), 1655–1696 (DSIY…VHPA), 1789–1831 (QFLY…DWLS), 1832–1881 (RNLY…DPAK), 1882–1929 (GKLY…DIQE), 1930–1971 (QKLY…YGPY), and 1972–2012 (LYYA…YRRR). Residues Asn-1677 and Asn-1809 are each glycosylated (N-linked (GlcNAc...) asparagine). An N-linked (GlcNAc...) asparagine glycan is attached at Asn-2053. LDL-receptor class B repeat units follow at residues 2105–2154 (GFVY…DWVA), 2155–2199 (GNLY…DPKN), 2200–2243 (RYLF…DHNS), 2244–2287 (GYIY…FGNS), 2429–2475 (NRIY…DWIG), 2476–2516 (RRIY…DPCQ), 2517–2560 (GYMY…DYKE), 2561–2602 (NLLY…YGQY), and 2603–2644 (IYWT…VVNN). 2 N-linked (GlcNAc...) asparagine glycosylation sites follow: Asn-2175 and Asn-2222. An N-linked (GlcNAc...) asparagine glycan is attached at Asn-2485. 10 LDL-receptor class A domains span residues 2696 to 2734 (RCNSTQFTCLSGYCILESLKCNDIDECGDSSDELETLCA), 2737 to 2773 (TCPPTSFTCANGRCIQRHFRCDHYNDCGDNSDESGCR), 2776 to 2815 (SCNITTEFSCNNGKCLPLQLVCDGIDHCNDNNTSDEKNCA), 2818 to 2857 (TCLPDYIKCANSNVCIPRLFLCDGDNDCGDMSDENPIYCV), 2860 to 2897 (TCKNNEFQCTSGSCIPELWHCDGERDCDDGSDEPATCV), 2902 to 2941 (TCSSDEFKCDNNRCIQMEWICDGDNDCGDMSDEDGRHHCE), 2944 to 2986 (NCSS…QNCT), 2989 to 3025 (NCSGTEFRCSNGLCIPNWFRCDRRNDCGDYSDERNCK), 3028 to 3066 (ACDENLFTCQNGICTYKSYICDGENDCGDNSDELEHLCH), and 3071 to 3107 (TCPPHQFRCNNGNCIEMVKVCNHQADCSDNSDEERCG). Disulfide bonds link Cys-2697-Cys-2709, Cys-2704-Cys-2722, Cys-2716-Cys-2733, Cys-2738-Cys-2750, Cys-2745-Cys-2763, Cys-2757-Cys-2772, Cys-2777-Cys-2790, Cys-2785-Cys-2803, Cys-2797-Cys-2814, Cys-2819-Cys-2832, Cys-2826-Cys-2845, Cys-2839-Cys-2856, Cys-2861-Cys-2873, Cys-2868-Cys-2886, Cys-2880-Cys-2896, Cys-2903-Cys-2915, Cys-2910-Cys-2928, and Cys-2922-Cys-2940. Residue Asn-2698 is glycosylated (N-linked (GlcNAc...) asparagine). N-linked (GlcNAc...) asparagine glycosylation is present at Asn-2778. Residues Asn-2806 and Asn-2807 are each glycosylated (N-linked (GlcNAc...) asparagine). N-linked (GlcNAc...) asparagine glycosylation occurs at Asn-2944. Intrachain disulfides connect Cys-2945/Cys-2962, Cys-2952/Cys-2975, and Cys-2969/Cys-2985. Residues Asn-2984 and Asn-2989 are each glycosylated (N-linked (GlcNAc...) asparagine). 9 disulfide bridges follow: Cys-2990/Cys-3002, Cys-2997/Cys-3015, Cys-3009/Cys-3024, Cys-3029/Cys-3041, Cys-3036/Cys-3054, Cys-3048/Cys-3065, Cys-3072/Cys-3084, Cys-3079/Cys-3097, and Cys-3091/Cys-3106. Asn-3122 is a glycosylation site (N-linked (GlcNAc...) asparagine). One can recognise an EGF-like 2; calcium-binding domain in the interval 3149-3189 (DIDECKETPSVCSQKCENLLGSYICKCAPGYTREPDGRSCR). 3 disulfide bridges follow: Cys-3153/Cys-3164, Cys-3160/Cys-3173, and Cys-3175/Cys-3188. N-linked (GlcNAc...) asparagine glycosylation is found at Asn-3208, Asn-3254, Asn-3312, and Asn-3352. LDL-receptor class B repeat units follow at residues 3236 to 3278 (ERLY…DWVT), 3279 to 3321 (RKLY…DKPR), 3330 to 3373 (GYVY…DYTN), 3374 to 3417 (DLLY…FEDT), and 3418 to 3458 (IYWT…YHPY). 2 N-linked (GlcNAc...) asparagine glycosylation sites follow: Asn-3435 and Asn-3444. LDL-receptor class A domains are found at residues 3509–3547 (MCSSTQFLCANNEMCIPIWWKCDGQKDCLDGSDEPNTCP), 3550–3588 (FCRLGQFQCSDGNCTSSNFICNARQDCPDGSDEDAVLCE), 3591–3629 (RCESNQWQCANKRCIPESWQCDSLNDCGDNSDEDSSHCA), 3632–3670 (TCLPGYFKCANGHCIPQSWKCDVDNDCGDYSDEPLQECM), 3675–3713 (RCDNYTEFDCKTNYRCIPKWAVCNGFDDCRDNSDEQNCE), 3716–3753 (TCKPSGEFRCTNHHCIPLRWRCDGHNDCGDNSDEENCV), 3756–3792 (QCSESEFRCDDQTCIPSRWICDQNNDCGDNSDERDCE), 3795–3831 (TCHPGYFQCSSGHCIPDQMRCDGFADCLDASDEATCP), and 3839–3877 (YCPATLFECKNHVCVQPSWKCDGDNDCGDGSDEELHLCL). Disulfide bonds link Cys-3510–Cys-3523, Cys-3517–Cys-3536, Cys-3530–Cys-3546, Cys-3551–Cys-3563, Cys-3558–Cys-3576, Cys-3570–Cys-3587, Cys-3592–Cys-3604, Cys-3599–Cys-3617, Cys-3611–Cys-3628, Cys-3633–Cys-3645, Cys-3640–Cys-3658, Cys-3652–Cys-3669, Cys-3676–Cys-3690, Cys-3684–Cys-3703, Cys-3697–Cys-3712, Cys-3717–Cys-3730, Cys-3725–Cys-3743, Cys-3737–Cys-3752, Cys-3757–Cys-3769, Cys-3764–Cys-3782, Cys-3776–Cys-3791, Cys-3796–Cys-3808, Cys-3803–Cys-3821, Cys-3815–Cys-3830, Cys-3840–Cys-3852, Cys-3847–Cys-3865, and Cys-3859–Cys-3876. Asn-3562 is a glycosylation site (N-linked (GlcNAc...) asparagine). Asn-3678 is a glycosylation site (N-linked (GlcNAc...) asparagine). N-linked (GlcNAc...) asparagine glycosylation occurs at Asn-3878. 2 LDL-receptor class A domains span residues 3880 to 3919 (TCDLTNRFRCDNNRCIYRHELCNHEDDCGDGSDEKKENCL) and 3925 to 3961 (PCTEGEFKCSNGHCISQHLVCDDVDDCGDHFDETGCN). 12 cysteine pairs are disulfide-bonded: Cys-3881/Cys-3894, Cys-3889/Cys-3907, Cys-3901/Cys-3918, Cys-3926/Cys-3938, Cys-3933/Cys-3951, Cys-3945/Cys-3960, Cys-3968/Cys-3977, Cys-3973/Cys-3987, Cys-3989/Cys-4003, Cys-4009/Cys-4019, Cys-4015/Cys-4028, and Cys-4030/Cys-4045. The EGF-like 3 domain maps to 3964–4004 (EERSCAENLCEHNCTQLIGGGFICSCRPGFKASSLNRNSCE). The N-linked (GlcNAc...) asparagine glycan is linked to Asn-3976. The 42-residue stretch at 4005 to 4046 (DINECEQFGVCPQNCHNTKGSYECTCAEGFRSMSEHYGERCA) folds into the EGF-like 4; calcium-binding domain. Asn-4066 carries N-linked (GlcNAc...) asparagine glycosylation. LDL-receptor class B repeat units follow at residues 4152-4194 (RHIY…NPKQ), 4195-4238 (GLMY…DYVN), and 4240-4281 (DRIY…FESQ). Asn-4325 is a glycosylation site (N-linked (GlcNAc...) asparagine). An EGF-like 5 domain is found at 4375–4409 (MPPPCRCMNEGNCYFDKNNLPKCKCPSGYMGEYCE). Disulfide bonds link Cys-4379-Cys-4387, Cys-4381-Cys-4397, and Cys-4399-Cys-4408. The chain crosses the membrane as a helical span at residues 4423 to 4443 (AVLVTLILIIIIGGLVALGFF). Residues 4444-4652 (HYRKTGSILI…ANLVREDSEA (209 aa)) are Cytoplasmic-facing. The SH3-binding signature appears at 4450–4459 (SILISMPRLP). The PxLPxI/L motif 1; mediates interaction with ANKRA2 motif lies at 4453–4458 (ISMPRL). The short motif at 4456–4461 (PRLPSL) is the PxLPxI/L motif 2; mediates interaction with ANKRA2 element. At Ser-4460 the chain carries Phosphoserine. The short motif at 4518 to 4523 (FENPMY) is the Endocytosis signal element. Over residues 4536–4553 (TTTQVSESGNVYNKNYGS) the composition is skewed to polar residues. Residues 4536–4652 (TTTQVSESGN…ANLVREDSEA (117 aa)) form a disordered region. The residue at position 4568 (Ser-4568) is a Phosphoserine. An interaction with DAB2 region spans residues 4588-4601 (QNTNFENPIYAETE). The NPXY motif motif lies at 4594–4597 (NPIY). The SH2-binding motif lies at 4597–4600 (YAET). An SH3-binding motif is present at residues 4610-4621 (VTPPPSPSPPAK). Ser-4615 bears the Phosphoserine mark. The segment covering 4626–4636 (KGTTPAYSATE) has biased composition (polar residues). The residue at position 4629 (Thr-4629) is a Phosphothreonine. Position 4650 is a phosphoserine (Ser-4650).

This sequence belongs to the LDLR family. In terms of assembly, binds plasminogen, extracellular matrix components, plasminogen activator-plasminogen activator inhibitor type I complex, apolipoprotein E-enriched beta-VLDL, lipoprotein lipase, lactoferrin, CLU/clusterin and calcium. Forms a multimeric complex together with LRPAP1. Interacts (via PxLPxI/L motif) with ANKRA2 (via ankyrin repeats). Interacts with LRP2BP. Interacts (via NPXY motif) with DAB2; the interaction is not affected by tyrosine phosphorylation of the NPXY motif. Interacts with MB. Interacts with BMP4. Interacts with the Sonic hedgehog protein N-product which is the active product of SHH. Interacts with CST3 in a calcium-dependent manner. Interacts with the vitamin-D binding protein GC/DBP. Interacts with sex hormone-binding protein SHBG. Interacts with angiotensin-2. Also interacts with angiotensin 1-7. Interacts with APOM. Interacts with selenoprotein SEPP1. Interacts with LEP. Interacts with ALB. Interacts with the antiapoptotic protein BIRC5/survivin. Interacts with matrix metalloproteinase MMP2 in complex with metalloproteinase inhibitor TIMP1. In neurons, forms a trimeric complex with APP and APPB1/FE65. Interacts with LDLRAP1/ARH; mediates trafficking of LRP2 to the endocytic recycling compartment. Does not interact with beta-amyloid protein 40 alone but interacts with the complex composed of beta-amyloid protein 40 and CLU/APOJ. Interacts with MDK. In terms of processing, a fraction undergoes proteolytic cleavage of the extracellular domain at the cell membrane to generate a cytoplasmic tail fragment. This is internalized into the early endosome from where it trafficks in an LDLRAP1/ARH-dependent manner to the endocytic recycling compartment (ERC). In the ERC, it is further cleaved by gamma-secretase to release a fragment which translocates to the nucleus and mediates transcriptional repression. N-glycosylation is required for ligand binding.

It localises to the apical cell membrane. Its subcellular location is the endosome lumen. The protein resides in the membrane. The protein localises to the clathrin-coated pit. It is found in the cell projection. It localises to the dendrite. Its subcellular location is the axon. In terms of biological role, multiligand endocytic receptor. Acts together with CUBN to mediate endocytosis of high-density lipoproteins. Mediates receptor-mediated uptake of polybasic drugs such as aprotinin, aminoglycosides and polymyxin B. In the kidney, mediates the tubular uptake and clearance of leptin. Also mediates transport of leptin across the blood-brain barrier through endocytosis at the choroid plexus epithelium. Endocytosis of leptin in neuronal cells is required for hypothalamic leptin signaling and leptin-mediated regulation of feeding and body weight. Mediates endocytosis and subsequent lysosomal degradation of CST3 in kidney proximal tubule cells. Mediates renal uptake of 25-hydroxyvitamin D3 in complex with the vitamin D3 transporter GC/DBP. Mediates renal uptake of metallothionein-bound heavy metals. Together with CUBN, mediates renal reabsorption of myoglobin. Mediates renal uptake and subsequent lysosomal degradation of APOM. Plays a role in kidney selenium homeostasis by mediating renal endocytosis of selenoprotein SEPP1. Mediates renal uptake of the antiapoptotic protein BIRC5/survivin which may be important for functional integrity of the kidney. Mediates renal uptake of matrix metalloproteinase MMP2 in complex with metalloproteinase inhibitor TIMP1. Mediates endocytosis of Sonic hedgehog protein N-product (ShhN), the active product of SHH. Also mediates ShhN transcytosis. In the embryonic neuroepithelium, mediates endocytic uptake and degradation of BMP4, is required for correct SHH localization in the ventral neural tube and plays a role in patterning of the ventral telencephalon. Required at the onset of neurulation to sequester SHH on the apical surface of neuroepithelial cells of the rostral diencephalon ventral midline and to control PTCH1-dependent uptake and intracellular trafficking of SHH. During neurulation, required in neuroepithelial cells for uptake of folate bound to the folate receptor FOLR1 which is necessary for neural tube closure. In the adult brain, negatively regulates BMP signaling in the subependymal zone which enables neurogenesis to proceed. In astrocytes, mediates endocytosis of ALB which is required for the synthesis of the neurotrophic factor oleic acid. Involved in neurite branching. During optic nerve development, required for SHH-mediated migration and proliferation of oligodendrocyte precursor cells. Mediates endocytic uptake and clearance of SHH in the retinal margin which protects retinal progenitor cells from mitogenic stimuli and keeps them quiescent. Plays a role in reproductive organ development by mediating uptake in reproductive tissues of androgen and estrogen bound to the sex hormone binding protein SHBG. Mediates endocytosis of angiotensin-2. Also mediates endocytosis of angiotensis 1-7. Binds to the complex composed of beta-amyloid protein 40 and CLU/APOJ and mediates its endocytosis and lysosomal degradation. Required for embryonic heart development. Required for normal hearing, possibly through interaction with estrogen in the inner ear. The polypeptide is Low-density lipoprotein receptor-related protein 2 (Sus scrofa (Pig)).